Consider the following 154-residue polypeptide: Myoglobin (154 aa).

A Globin domain is found at 2 to 148 (GLSDGEWQLV…FRNDMAAKYK (147 aa)). Serine 4 carries the post-translational modification Phosphoserine. Histidine 65 is a binding site for nitrite. Position 65 (histidine 65) interacts with O2. The residue at position 68 (threonine 68) is a Phosphothreonine. Histidine 94 serves as a coordination point for heme b.

The protein belongs to the globin family. Monomeric.

Its subcellular location is the cytoplasm. It is found in the sarcoplasm. The enzyme catalyses Fe(III)-heme b-[protein] + nitric oxide + H2O = Fe(II)-heme b-[protein] + nitrite + 2 H(+). The catalysed reaction is H2O2 + AH2 = A + 2 H2O. Its function is as follows. Monomeric heme protein which primary function is to store oxygen and facilitate its diffusion within muscle tissues. Reversibly binds oxygen through a pentacoordinated heme iron and enables its timely and efficient release as needed during periods of heightened demand. Depending on the oxidative conditions of tissues and cells, and in addition to its ability to bind oxygen, it also has a nitrite reductase activity whereby it regulates the production of bioactive nitric oxide. Under stress conditions, like hypoxia and anoxia, it also protects cells against reactive oxygen species thanks to its pseudoperoxidase activity. The chain is Myoglobin (MB) from Saimiri sciureus (Common squirrel monkey).